The sequence spans 443 residues: Xaa-Pro dipeptidase (443 aa).

Mn(2+) is bound by residues aspartate 246, aspartate 257, histidine 339, glutamate 384, and glutamate 423.

It belongs to the peptidase M24B family. Bacterial-type prolidase subfamily. Requires Mn(2+) as cofactor.

The catalysed reaction is Xaa-L-Pro dipeptide + H2O = an L-alpha-amino acid + L-proline. Functionally, splits dipeptides with a prolyl residue in the C-terminal position. This Serratia proteamaculans (strain 568) protein is Xaa-Pro dipeptidase.